Consider the following 181-residue polypeptide: Probable Brix domain-containing ribosomal biogenesis protein (181 aa).

Residues 5–181 (CKVIITTSRE…RIKKVVYRHV (177 aa)) form the Brix domain.

In terms of biological role, probably involved in the biogenesis of the ribosome. The sequence is that of Probable Brix domain-containing ribosomal biogenesis protein from Pyrobaculum aerophilum (strain ATCC 51768 / DSM 7523 / JCM 9630 / CIP 104966 / NBRC 100827 / IM2).